The sequence spans 2210 residues: RNA-directed RNA polymerase L (2210 aa).

The segment at 26–284 (KDAFLSHCHS…KHEDNTTSDC (259 aa)) is endonuclease. Mn(2+)-binding residues include Glu-51, Asp-89, and Glu-102. Lys-115 is a catalytic residue. In terms of domain architecture, RdRp catalytic spans 1172-1368 (CDMKLAVNNG…YLSSKLNKFV (197 aa)). Residue Asp-1330 coordinates Mg(2+).

The protein belongs to the Bunyavirales RNA polymerase family. In terms of assembly, homomultimer; the oligomeric structure is essential for the polymerase activity. Interacts with nucleoprotein N. Interacts with protein Z; this interaction inhibits viral transcription and replication, Z partially blocks the product exit tunnel for the releasing nascent RNA product. Requires Mn(2+) as cofactor. Mg(2+) is required as a cofactor.

The protein resides in the virion. It is found in the host cytoplasm. It carries out the reaction RNA(n) + a ribonucleoside 5'-triphosphate = RNA(n+1) + diphosphate. In terms of biological role, RNA-dependent RNA polymerase, which is responsible for the replication and transcription of the viral RNA genome using antigenomic RNA as an intermediate. During transcription, synthesizes subgenomic RNAs and assures their capping by a cap-snatching mechanism, which involves the endonuclease activity cleaving the host capped pre-mRNAs. These short capped RNAs are then used as primers for viral transcription. The 3'-end of subgenomic mRNAs molecules are heterogeneous and not polyadenylated. The replicase function is to direct synthesis of antigenomic and genomic RNA which are encapsidated and non capped. As a consequence of the use of the same enzyme for both transcription and replication, these mechanisms need to be well coordinated. These processes may be regulated by proteins N and Z in a dose-dependent manner. Z protein inhibits the viral polymerase L und thus the viral transcription and RNA synthesis. This Tacaribe virus (strain Franze-Fernandez) (TCRV) protein is RNA-directed RNA polymerase L.